A 387-amino-acid polypeptide reads, in one-letter code: Testis-expressed protein 9 (387 aa).

Disordered regions lie at residues 1 to 25 (MAGRSVRVPRRGSAGTQSRGQLAAG) and 58 to 133 (REQQ…LKYP). Composition is skewed to polar residues over residues 70–91 (ALTTSCKEEGGSSSRDLLSSEG) and 103–115 (KNTGPVNKIQNRL). Positions 184-347 (IGTEAQIRFL…ERQKGELMIG (164 aa)) form a coiled coil.

In terms of tissue distribution, testis-specific.

Its subcellular location is the cytoplasm. It localises to the cytoskeleton. It is found in the microtubule organizing center. The protein localises to the centrosome. The protein resides in the centriolar satellite. This is Testis-expressed protein 9 (Tex9) from Mus musculus (Mouse).